Here is a 465-residue protein sequence, read N- to C-terminus: Serine/threonine-protein kinase 38 (465 aa).

Ala2 is subject to N-acetylalanine. An interaction with S100B region spans residues 62-87 (KRLRRSAHARKETEFLRLKRTRLGLE). Thr74 carries the post-translational modification Phosphothreonine. One can recognise a Protein kinase domain in the interval 89–382 (FESLKVIGRG…VEEIKSNSFF (294 aa)). ATP contacts are provided by residues 95–103 (IGRGAFGEV) and Lys118. Catalysis depends on Asp212, which acts as the Proton acceptor. Ser264 is subject to Phosphoserine. Ser281 is modified (phosphoserine; by autocatalysis). The short motif at 306 to 311 (WSLGVI) is the UFM1-interacting motif (UFIM) element. An AGC-kinase C-terminal domain is found at 383-455 (EGVDWEHIRE…KRFEGLTARG (73 aa)). The residue at position 444 (Thr444) is a Phosphothreonine; by STK24/MST3.

This sequence belongs to the protein kinase superfamily. AGC Ser/Thr protein kinase family. Homodimeric S100B binds two molecules of STK38. Interacts with MOB1 and MOB2. Interacts with MAP3K1 and MAP3K2 (via the kinase catalytic domain). Forms a tripartite complex with MOBKL1B and STK3/MST2. Interacts with MICAL1; leading to inhibit the protein kinase activity by antagonizing activation by MST1/STK4. Mg(2+) serves as cofactor. In terms of processing, ISGylated. Post-translationally, phosphorylated by STK3/MST2 and this is enhanced by MOBKL1B. As to expression, ubiquitously expressed with highest levels observed in peripheral blood leukocytes.

The protein localises to the nucleus. Its subcellular location is the cytoplasm. The protein resides in the chromosome. The enzyme catalyses L-seryl-[protein] + ATP = O-phospho-L-seryl-[protein] + ADP + H(+). It carries out the reaction L-threonyl-[protein] + ATP = O-phospho-L-threonyl-[protein] + ADP + H(+). With respect to regulation, activated by binding of S100B which releases autoinhibitory N-lobe interactions, enabling ATP to bind and the autophosphorylation of Ser-281. Thr-444 then undergoes calcium-dependent phosphorylation by STK24/MST3. Interactions between phosphorylated Thr-444 and the N-lobe promote additional structural changes that complete the activation of the kinase. Autoinhibition is also released by the binding of MOB1/MOBKL1A and MOB2/HCCA2 to the N-terminal of STK38. In terms of biological role, serine/threonine-protein kinase that acts as a negative regulator of MAP3K1/2 signaling. Converts MAP3K2 from its phosphorylated form to its non-phosphorylated form and inhibits autophosphorylation of MAP3K2. Acts as an ufmylation 'reader' in a kinase-independent manner: specifically recognizes and binds mono-ufmylated histone H4 in response to DNA damage, promoting the recruitment of SUV39H1 to the double-strand breaks, resulting in ATM activation. The protein is Serine/threonine-protein kinase 38 of Homo sapiens (Human).